We begin with the raw amino-acid sequence, 651 residues long: Probable export ATP-binding/permease protein Pfl01_2215 (651 aa).

The region spanning L6 to S244 is the ABC transporter domain. G42 to S49 contacts ATP. 5 consecutive transmembrane segments (helical) span residues L250–S270, L276–G296, L524–M544, L585–I605, and L614–V634.

Belongs to the ABC transporter superfamily. Macrolide exporter (TC 3.A.1.122) family. Probably part of a tripartite efflux system, which is composed of an inner membrane transporter, a periplasmic membrane fusion protein, and an outer membrane component.

It is found in the cell inner membrane. Probably part of a tripartite efflux system. In Pseudomonas fluorescens (strain Pf0-1), this protein is Probable export ATP-binding/permease protein Pfl01_2215.